The following is a 627-amino-acid chain: Ski protein homolog (627 aa).

Positions 1-12 are enriched in polar residues; the sequence is MSDSPIGSSQQV. Disordered stretches follow at residues 1–22, 34–58, and 299–318; these read MSDSPIGSSQQVEPEHRTPDLM, LHEETRSDDDDDGQPSTSAKRKDSR, and EYDEAAPHQAPPKRPAMETP.

Belongs to the SKI family. As to quaternary structure, may interact with daf-3. In terms of tissue distribution, expressed in ganglia in the head and tail and in the anterior pharynx.

The protein localises to the nucleus. In terms of biological role, probable component of transcriptional regulatory complex with SMAD protein daf-3. Required to regulate entry into a developmentally arrested larval state known as dauer, in response to harsh environmental conditions. Involved in larvae undergoing cell-cycle arrest during the dauer stage. This chain is Ski protein homolog, found in Caenorhabditis elegans.